Here is an 87-residue protein sequence, read N- to C-terminus: HssA/B-like protein 57 (87 aa).

This sequence belongs to the hssA/B family.

The sequence is that of HssA/B-like protein 57 (hssl57) from Dictyostelium discoideum (Social amoeba).